The following is a 582-amino-acid chain: Arginine--tRNA ligase (582 aa).

A 'HIGH' region motif is present at residues 128–138; it reads PNLAKEMHVGH.

Belongs to the class-I aminoacyl-tRNA synthetase family. Monomer.

It is found in the cytoplasm. It carries out the reaction tRNA(Arg) + L-arginine + ATP = L-arginyl-tRNA(Arg) + AMP + diphosphate. This chain is Arginine--tRNA ligase, found in Colwellia psychrerythraea (strain 34H / ATCC BAA-681) (Vibrio psychroerythus).